The chain runs to 365 residues: 2-aminoethylphosphonate--pyruvate transaminase (365 aa).

At Lys194 the chain carries N6-(pyridoxal phosphate)lysine.

Belongs to the class-V pyridoxal-phosphate-dependent aminotransferase family. PhnW subfamily. In terms of assembly, homodimer. Requires pyridoxal 5'-phosphate as cofactor.

It catalyses the reaction (2-aminoethyl)phosphonate + pyruvate = phosphonoacetaldehyde + L-alanine. In terms of biological role, involved in phosphonate degradation. In Bacillus cereus (strain AH187), this protein is 2-aminoethylphosphonate--pyruvate transaminase.